The following is a 908-amino-acid chain: Isoleucine--tRNA ligase (908 aa).

Residues 59-69 (PYANGDLHIGH) carry the 'HIGH' region motif. Glutamate 554 is a binding site for L-isoleucyl-5'-AMP. Residues 595 to 599 (KMSKS) carry the 'KMSKS' region motif. Lysine 598 lines the ATP pocket. Positions 882, 885, 898, and 901 each coordinate Zn(2+).

Belongs to the class-I aminoacyl-tRNA synthetase family. IleS type 1 subfamily. Monomer. Requires Zn(2+) as cofactor.

Its subcellular location is the cytoplasm. The enzyme catalyses tRNA(Ile) + L-isoleucine + ATP = L-isoleucyl-tRNA(Ile) + AMP + diphosphate. Its function is as follows. Catalyzes the attachment of isoleucine to tRNA(Ile). As IleRS can inadvertently accommodate and process structurally similar amino acids such as valine, to avoid such errors it has two additional distinct tRNA(Ile)-dependent editing activities. One activity is designated as 'pretransfer' editing and involves the hydrolysis of activated Val-AMP. The other activity is designated 'posttransfer' editing and involves deacylation of mischarged Val-tRNA(Ile). The sequence is that of Isoleucine--tRNA ligase from Mesoplasma florum (strain ATCC 33453 / NBRC 100688 / NCTC 11704 / L1) (Acholeplasma florum).